The sequence spans 305 residues: Coenzyme PQQ synthesis protein B (305 aa).

This sequence belongs to the PqqB family.

It functions in the pathway cofactor biosynthesis; pyrroloquinoline quinone biosynthesis. Functionally, may be involved in the transport of PQQ or its precursor to the periplasm. This Methylobacillus flagellatus (strain ATCC 51484 / DSM 6875 / VKM B-1610 / KT) protein is Coenzyme PQQ synthesis protein B.